A 488-amino-acid chain; its full sequence is GTPase Der (488 aa).

2 consecutive EngA-type G domains span residues 3 to 166 (PVVA…AEAM) and 199 to 372 (IKLA…DSAT). Residues 9-16 (GRPNVGKS), 56-60 (DTGGI), 118-121 (NKVD), 205-212 (GKPNVGKS), 252-256 (DTAGV), and 317-320 (NKWD) each bind GTP. The KH-like domain occupies 373 to 457 (RRVSTSMLTR…PIQLRFQEGD (85 aa)). The tract at residues 460–488 (FENKTEKLTMSQERRRKRAQSHIKDRKTK) is disordered. Residues 473-488 (RRRKRAQSHIKDRKTK) show a composition bias toward basic residues.

This sequence belongs to the TRAFAC class TrmE-Era-EngA-EngB-Septin-like GTPase superfamily. EngA (Der) GTPase family. As to quaternary structure, associates with the 50S ribosomal subunit.

Its function is as follows. GTPase that plays an essential role in the late steps of ribosome biogenesis. In Shewanella baltica (strain OS155 / ATCC BAA-1091), this protein is GTPase Der.